Reading from the N-terminus, the 60-residue chain is RICYNHQSTTPATTKSCGENSCYKKTWSDHRGTIIERGCGCPKVKQGIHLHCCQSDKCNN.

Disulfide bonds link Cys-3-Cys-22, Cys-17-Cys-39, Cys-41-Cys-52, and Cys-53-Cys-58.

The protein belongs to the three-finger toxin family. Short-chain subfamily. Type I alpha-neurotoxin sub-subfamily. In terms of tissue distribution, expressed by the venom gland.

The protein localises to the secreted. Its function is as follows. Binds to muscle nicotinic acetylcholine receptor (nAChR) and inhibit acetylcholine from binding to the receptor, thereby impairing neuromuscular transmission. This is Short neurotoxin 1 from Dendroaspis jamesoni kaimosae (Eastern Jameson's mamba).